The sequence spans 78 residues: Small ribosomal subunit protein bS18A (78 aa).

Belongs to the bacterial ribosomal protein bS18 family. In terms of assembly, part of the 30S ribosomal subunit. Forms a tight heterodimer with protein bS6.

Its function is as follows. Binds as a heterodimer with protein bS6 to the central domain of the 16S rRNA, where it helps stabilize the platform of the 30S subunit. This chain is Small ribosomal subunit protein bS18A, found in Streptomyces avermitilis (strain ATCC 31267 / DSM 46492 / JCM 5070 / NBRC 14893 / NCIMB 12804 / NRRL 8165 / MA-4680).